A 1242-amino-acid polypeptide reads, in one-letter code: Structural polyprotein (1242 aa).

The segment at 1 to 36 is necessary for nucleocapsid assembly and virus assembly; it reads MFPYPTLNYPPMAPVNPMAYRDPNPPRRRWRPFRPP. The interval 1-104 is disordered; the sequence is MFPYPTLNYP…KQKPGKRQRM (104 aa). Residues 37–70 form a host transcription inhibition region; that stretch reads LAAQIEDLRRSIANLTFKQRAPNPPAGPPAKRKK. Residues 44–51 carry the Supraphysiological nuclear export signal motif; sequence LRRSIANL. Residues 66–104 show a composition bias toward basic residues; that stretch reads AKRKKPAPKPKPAAPKKKRQPPPAKKQKRKQKPGKRQRM. The Nuclear localization signal motif lies at 67 to 70; that stretch reads KRKK. Residues 83-113 are binding to the viral RNA; sequence KRQPPPAKKQKRKQKPGKRQRMCMKLESDKT. A ribosome-binding region spans residues 98 to 112; the sequence is PGKRQRMCMKLESDK. Position 110 is a phosphoserine (Ser-110). The region spanning 112 to 261 is the Peptidase S3 domain; sequence KTFPIMLNGQ…KDTPEGSEPW (150 aa). Thr-113 carries the post-translational modification Phosphothreonine. Catalysis depends on charge relay system residues His-138, Asp-160, and Ser-212. The tract at residues 262-273 is functions as an uncleaved signal peptide for the precursor of protein E3/E2; that stretch reads SLTTVMCVLANI. N-linked (GlcNAc...) asparagine; by host glycosylation occurs at Asn-272. At 325 to 688 the chain is on the extracellular side; the sequence is DLETHFTQYK…YYYNRYPMTT (364 aa). The chain crosses the membrane as a helical span at residues 689 to 709; it reads VIGLCTCVAIIMVSCVTSVWL. Residues 710–744 are Cytoplasmic-facing; sequence LCRTRNLCITPYRLAPNAQVPILLAVLCCVKPTRA. 3 S-palmitoyl cysteine; by host lipidation sites follow: Cys-717, Cys-737, and Cys-738. A transient transmembrane before p62-6K protein processing region spans residues 717–737; it reads CITPYRLAPNAQVPILLAVLC. Over 745 to 759 the chain is Extracellular; that stretch reads DDTLQVLNYLWNNNQ. Helical transmembrane passes span 760–780 and 781–801; these read NFFWMQTLIPLAALIVCMRML and RCLLCCGPAFLLVCGALGAAA. Residues 802 to 1218 are Extracellular-facing; sequence YEHAAVMPNK…WSWLKVLVGS (417 aa). 8 disulfide bridges follow: Cys-850-Cys-915, Cys-863-Cys-895, Cys-864-Cys-897, Cys-869-Cys-879, Cys-1061-Cys-1073, Cys-1103-Cys-1178, Cys-1108-Cys-1182, and Cys-1130-Cys-1172. The tract at residues 885 to 902 is E1 fusion peptide loop; that stretch reads VYPFMWGGAYCFCDTENT. The chain crosses the membrane as a helical span at residues 1219-1239; the sequence is TSAFIVLGLIATAVVALVLFT. The Cytoplasmic segment spans residues 1240–1242; it reads HRH.

In terms of assembly, part of a tetrameric complex composed of host CRM1, host importin alpha/beta dimer and the viral capsid; this complex blocks the receptor-mediated transport through the nuclear pore. Interacts with host phosphatase PPP1CA; this interaction dephosphorylates the capsid protein, which increases its ability to bind to the viral genome. Interacts with host karyopherin KPNA4; this interaction allows the nuclear import of the viral capsid protein. Interacts with spike glycoprotein E2. Interacts with host IRAK1; the interaction leads to inhibition of IRAK1-dependent signaling. The precursor of protein E3/E2 and E1 form a heterodimer shortly after synthesis. As to quaternary structure, the precursor of protein E3/E2 and E1 form a heterodimer shortly after synthesis. Processing of the precursor of protein E3/E2 into E2 and E3 results in a heterodimer of the spike glycoproteins E2 and E1. Spike at virion surface are constituted of three E2-E1 heterodimers. After target cell attachment and endocytosis, E1 change conformation to form homotrimers. Interacts with 6K protein. In terms of assembly, processing of the precursor of protein E3/E2 into E2 and E3 results in a heterodimer of the spike glycoproteins E2 and E1. Spike at virion surface are constituted of three E2-E1 heterodimers. Interacts with 6K protein. Interacts with spike glycoprotein E1. Interacts with spike glycoprotein E2. Post-translationally, structural polyprotein: Specific enzymatic cleavages in vivo yield mature proteins. Capsid protein is auto-cleaved during polyprotein translation, unmasking a signal peptide at the N-terminus of the precursor of E3/E2. The remaining polyprotein is then targeted to the host endoplasmic reticulum, where host signal peptidase cleaves it into pE2, 6K and E1 proteins. pE2 is further processed to mature E3 and E2 by host furin in trans-Golgi vesicle. Phosphorylated on serine and threonine residues. In terms of processing, palmitoylated via thioester bonds. These palmitoylations may induce disruption of the C-terminus transmembrane. This would result in the reorientation of E2 C-terminus from lumenal to cytoplasmic side. Post-translationally, N-glycosylated. Palmitoylated via thioester bonds.

It localises to the virion. It is found in the host cytoplasm. The protein resides in the host cell membrane. Its subcellular location is the host nucleus. The protein localises to the virion membrane. It carries out the reaction Autocatalytic release of the core protein from the N-terminus of the togavirus structural polyprotein by hydrolysis of a -Trp-|-Ser- bond.. In terms of biological role, forms an icosahedral capsid with a T=4 symmetry composed of 240 copies of the capsid protein surrounded by a lipid membrane through which penetrate 80 spikes composed of trimers of E1-E2 heterodimers. The capsid protein binds to the viral RNA genome at a site adjacent to a ribosome binding site for viral genome translation following genome release. Possesses a protease activity that results in its autocatalytic cleavage from the nascent structural protein. Following its self-cleavage, the capsid protein transiently associates with ribosomes, and within several minutes the protein binds to viral RNA and rapidly assembles into icosahedric core particles. The resulting nucleocapsid eventually associates with the cytoplasmic domain of the spike glycoprotein E2 at the cell membrane, leading to budding and formation of mature virions. In case of infection, new virions attach to target cells and after clathrin-mediated endocytosis their membrane fuses with the host endosomal membrane. This leads to the release of the nucleocapsid into the cytoplasm, followed by an uncoating event necessary for the genomic RNA to become accessible. The uncoating might be triggered by the interaction of capsid proteins with ribosomes. Binding of ribosomes would release the genomic RNA since the same region is genomic RNA-binding and ribosome-binding. Specifically inhibits interleukin-1 receptor-associated kinase 1/IRAK1-dependent signaling during viral entry, representing a means by which the alphaviruses may evade innate immune detection and activation prior to viral gene expression. Inhibits host transcription. Forms a tetrameric complex with XPO1/CRM1 and the nuclear import receptor importin. This complex blocks the central channel of host nuclear pores thereby inhibiting the receptor-mediated nuclear transport and thus the host mRNA and rRNA transcription. The inhibition of transcription is linked to a cytopathic effect on the host cell. Provides the signal sequence for the translocation of the precursor of protein E3/E2 to the host endoplasmic reticulum. Furin-cleaved E3 remains associated with spike glycoprotein E1 and mediates pH protection of the latter during the transport via the secretory pathway. After virion release from the host cell, the assembly protein E3 is gradually released in the extracellular space. Functionally, plays a role in viral attachment to target host cell, by binding to the cell receptor. Synthesized as a p62 precursor which is processed by furin at the cell membrane just before virion budding, giving rise to E2-E1 heterodimer. The p62-E1 heterodimer is stable, whereas E2-E1 is unstable and dissociate at low pH. p62 is processed at the last step, presumably to avoid E1 fusion activation before its final export to cell surface. E2 C-terminus contains a transitory transmembrane that would be disrupted by palmitoylation, resulting in reorientation of the C-terminal tail from lumenal to cytoplasmic side. This step is critical since E2 C-terminus is involved in budding by interacting with capsid proteins. This release of E2 C-terminus in cytoplasm occurs lately in protein export, and precludes premature assembly of particles at the endoplasmic reticulum membrane. Its function is as follows. Constitutive membrane protein involved in virus glycoprotein processing, cell permeabilization, and the budding of viral particles. Disrupts the calcium homeostasis of the cell, probably at the endoplasmic reticulum level. This leads to cytoplasmic calcium elevation. Because of its lipophilic properties, the 6K protein is postulated to influence the selection of lipids that interact with the transmembrane domains of the glycoproteins, which, in turn, affects the deformability of the bilayer required for the extreme curvature that occurs as budding proceeds. Present in low amount in virions, about 3% compared to viral glycoproteins. In terms of biological role, class II viral fusion protein. Fusion activity is inactive as long as E1 is bound to E2 in mature virion. After virus attachment to target cell and endocytosis, acidification of the endosome would induce dissociation of E1/E2 heterodimer and concomitant trimerization of the E1 subunits. This E1 trimer is fusion active, and promotes release of viral nucleocapsid in cytoplasm after endosome and viral membrane fusion. Efficient fusion requires the presence of cholesterol and sphingolipid in the target membrane. Fusion is optimal at levels of about 1 molecule of cholesterol per 2 molecules of phospholipids, and is specific for sterols containing a 3-beta-hydroxyl group. The polypeptide is Structural polyprotein (Aedes (Human)).